Consider the following 92-residue polypeptide: Small ribosomal subunit protein uS19 (92 aa).

This sequence belongs to the universal ribosomal protein uS19 family.

In terms of biological role, protein S19 forms a complex with S13 that binds strongly to the 16S ribosomal RNA. This is Small ribosomal subunit protein uS19 from Hyphomonas neptunium (strain ATCC 15444).